Here is a 370-residue protein sequence, read N- to C-terminus: MRFLYACFVIVLCALIFCEYVADFVVLQKCKWPEIKRKKYVDDPLRAMILADPHLLGPHRGHWLDKLYREWHMTRAFQAASRLFQPDVVFVLGDLFDEGDMVSDKQFQEYVWRYLKMFHLPPGIPLISVAGNHDVGFHYKMHPFFMSRFESYLNNSSVNLYTIKQIHFVVINSMAMEGDGCMFCTQAEDQLKNISRTLYCMKYPLEAECARTRRHPYSQPILLQHFPTYRISDTMCEEHDAPYIEAFRERFHVLSKDATDMLGELLKPRLAFAGHSHHFCHSVNRLGIDEYTVASFSWRNKVNPSFMLATITPDDYVVSKCKMLPQQFVFNSYLSAGILCLIVIGFQLRKCIQSRRQSSAVDHRKVNYLD.

Residues 7 to 27 (CFVIVLCALIFCEYVADFVVL) form a helical membrane-spanning segment. Positions 52, 94, 132, 225, 275, and 277 each coordinate a divalent metal cation. Residues 328 to 348 (FVFNSYLSAGILCLIVIGFQL) traverse the membrane as a helical segment.

The protein belongs to the metallophosphoesterase superfamily. MPPE1 family. It depends on Mn(2+) as a cofactor.

The protein resides in the membrane. Metallophosphoesterase. This chain is Metallophosphoesterase 1 homolog (PGAP5), found in Drosophila melanogaster (Fruit fly).